A 644-amino-acid chain; its full sequence is Chaperone protein HscA (644 aa).

This sequence belongs to the heat shock protein 70 family.

Its function is as follows. Chaperone involved in the maturation of iron-sulfur cluster-containing proteins. Has a low intrinsic ATPase activity which is markedly stimulated by HscB. Involved in the maturation of IscU. This chain is Chaperone protein HscA, found in Yersinia pseudotuberculosis serotype I (strain IP32953).